A 492-amino-acid polypeptide reads, in one-letter code: Cobyric acid synthase (492 aa).

Positions H259–A453 constitute a GATase cobBQ-type domain. Residue C340 is the Nucleophile of the active site. H445 is a catalytic residue.

This sequence belongs to the CobB/CobQ family. CobQ subfamily.

It functions in the pathway cofactor biosynthesis; adenosylcobalamin biosynthesis. Catalyzes amidations at positions B, D, E, and G on adenosylcobyrinic A,C-diamide. NH(2) groups are provided by glutamine, and one molecule of ATP is hydrogenolyzed for each amidation. The chain is Cobyric acid synthase from Paracidovorax citrulli (strain AAC00-1) (Acidovorax citrulli).